The sequence spans 230 residues: Response regulator MprA (230 aa).

The 115-residue stretch at 4–118 (RILVVDDDRA…ELLARMRALL (115 aa)) folds into the Response regulatory domain. Asp48 is subject to 4-aspartylphosphate. Positions 129–227 (SMAMRFSDLT…VRGVGYVLRE (99 aa)) form a DNA-binding region, ompR/PhoB-type.

In terms of assembly, monomer. Interaction with each conserved 8-bp repeat requires tandem binding by two protein monomers. Phosphorylated and dephosphorylated by MprB.

The protein localises to the cytoplasm. Its function is as follows. Member of the two-component regulatory system MprB/MprA which contributes to maintaining a balance among several systems involved in stress resistance and is required for establishment and maintenance of persistent infection in the host. Functions as a transcriptional regulator that recognizes a 19-bp nucleotide motif comprizing two loosely conserved 8-bp direct DNA-binding motif repeats separated by a 3-bp spacer region. MprB/MprA up-regulates expression of mprA and pepD. The protein is Response regulator MprA (mprA) of Mycobacterium bovis (strain ATCC BAA-935 / AF2122/97).